We begin with the raw amino-acid sequence, 311 residues long: MSVLVKEVIEKLRLDIVYGEPELLEKEINIADITRPGLEMTGYFDYYTPERIQLLGMKEWSYLISMPSNSRYEVLKKMFLPETPAVIVARGLVVPEEMLKAARECKIAILTSRAATSRLSGELSSYLDSRLAERTSVHGVLMDIYGMGVLIQGDSGIGKSETGLELVKRGHRLVADDRVDIFAKDEITLWGEPAEILKHLIEIRGVGIIDVMSLYGASAVKDSSQVQLAVYLENYDTHKTFDRLGNNAEELEVSGVAIPRIRIPVKTGRNISVVIEAAAMNYRAKEMGFDATRLFDERLTSLIARNEVQNA.

Active-site residues include His-138 and Lys-159. Residue 153–160 participates in ATP binding; it reads GDSGIGKS. Ser-160 serves as a coordination point for Mg(2+). Asp-177 acts as the Proton acceptor; for phosphorylation activity. Proton donor; for dephosphorylation activity in catalysis. The tract at residues 201-210 is important for the catalytic mechanism of both phosphorylation and dephosphorylation; that stretch reads IEIRGVGIID. Glu-202 is a binding site for Mg(2+). The active site involves Arg-243. The segment at 264 to 269 is important for the catalytic mechanism of dephosphorylation; the sequence is PVKTGR.

It belongs to the HPrK/P family. Homohexamer. Mg(2+) serves as cofactor.

It catalyses the reaction [HPr protein]-L-serine + ATP = [HPr protein]-O-phospho-L-serine + ADP + H(+). The enzyme catalyses [HPr protein]-O-phospho-L-serine + phosphate + H(+) = [HPr protein]-L-serine + diphosphate. In terms of biological role, catalyzes the ATP- as well as the pyrophosphate-dependent phosphorylation of a specific serine residue in HPr, a phosphocarrier protein of the phosphoenolpyruvate-dependent sugar phosphotransferase system (PTS). HprK/P also catalyzes the pyrophosphate-producing, inorganic phosphate-dependent dephosphorylation (phosphorolysis) of seryl-phosphorylated HPr (P-Ser-HPr). The two antagonistic activities of HprK/P are regulated by several intracellular metabolites, which change their concentration in response to the absence or presence of rapidly metabolisable carbon sources (glucose, fructose, etc.) in the growth medium. Therefore, by controlling the phosphorylation state of HPr, HPrK/P is a sensor enzyme that plays a major role in the regulation of carbon metabolism and sugar transport: it mediates carbon catabolite repression (CCR), and regulates PTS-catalyzed carbohydrate uptake and inducer exclusion. This Streptococcus pneumoniae serotype 2 (strain D39 / NCTC 7466) protein is HPr kinase/phosphorylase.